We begin with the raw amino-acid sequence, 483 residues long: Regulatory protein ViaA (483 aa).

The protein belongs to the ViaA family. Homodimer. Interacts with RavA.

It localises to the cytoplasm. Its function is as follows. Component of the RavA-ViaA chaperone complex, which may act on the membrane to optimize the function of some of the respiratory chains. ViaA stimulates the ATPase activity of RavA. The sequence is that of Regulatory protein ViaA from Shigella flexneri serotype 5b (strain 8401).